The following is a 376-amino-acid chain: Putative type I restriction enzyme MpnIIP endonuclease subunit N-terminal part (376 aa).

In terms of biological role, the N-terminal section of a putative type I restriction enzyme that if reconstituted might recognize 5'-GAN(7)TAY-3' and cleave a random distance away. Subunit R is required for both nuclease and ATPase activities, but not for modification. This Mycoplasma pneumoniae (strain ATCC 29342 / M129 / Subtype 1) (Mycoplasmoides pneumoniae) protein is Putative type I restriction enzyme MpnIIP endonuclease subunit N-terminal part.